We begin with the raw amino-acid sequence, 229 residues long: Octanoyltransferase (229 aa).

Residues 47 to 225 form the BPL/LPL catalytic domain; sequence PSSPEAVWIL…SLAARFHLAW (179 aa). Substrate is bound by residues 89 to 96, 156 to 158, and 169 to 171; these read RGGEVTHH, AIG, and GLA. Residue Cys-187 is the Acyl-thioester intermediate of the active site.

Belongs to the LipB family.

Its subcellular location is the cytoplasm. The catalysed reaction is octanoyl-[ACP] + L-lysyl-[protein] = N(6)-octanoyl-L-lysyl-[protein] + holo-[ACP] + H(+). The protein operates within protein modification; protein lipoylation via endogenous pathway; protein N(6)-(lipoyl)lysine from octanoyl-[acyl-carrier-protein]: step 1/2. In terms of biological role, catalyzes the transfer of endogenously produced octanoic acid from octanoyl-acyl-carrier-protein onto the lipoyl domains of lipoate-dependent enzymes. Lipoyl-ACP can also act as a substrate although octanoyl-ACP is likely to be the physiological substrate. The sequence is that of Octanoyltransferase from Synechococcus sp. (strain CC9902).